Here is a 525-residue protein sequence, read N- to C-terminus: Probable lipid II flippase MurJ (525 aa).

The next 14 membrane-spanning stretches (helical) occupy residues 10–30, 32–52, 100–120, 140–160, 171–191, 203–223, 247–267, 285–305, 330–350, 368–388, 402–422, 423–443, 455–475, and 495–515; these read LLKSGIIVSAMTLISRVLGLV, DVVVANLMGAGASADVFFFAN, VLVTIVTLIGVLGSGAVTALF, LASLLLKITFPYLWFITFVAL, FAVSSFTPVFLNVMMILCAWY, LAIGVFLGGLVQFLFQLPFLI, MIPALFGVSVSQINLLFDSFV, LLEFPLGLFGIAIATVILPAL, FLGIPAMLGLMVLAKPMLMVL, LLAYSSGLLSFMLIKVLAPGY, IIAMVSNIVLNAIFAWFYGYV, GLAVATSMSAFLNMALLYRGL, TVWFVARLAMAGAVMTGALLW, and LTGLIGLGVASYLAILLLLGV.

The protein belongs to the MurJ/MviN family.

It localises to the cell inner membrane. It functions in the pathway cell wall biogenesis; peptidoglycan biosynthesis. Functionally, involved in peptidoglycan biosynthesis. Transports lipid-linked peptidoglycan precursors from the inner to the outer leaflet of the cytoplasmic membrane. The sequence is that of Probable lipid II flippase MurJ from Vibrio cholerae serotype O1 (strain ATCC 39315 / El Tor Inaba N16961).